A 532-amino-acid chain; its full sequence is Pentatricopeptide repeat-containing protein At4g02820, mitochondrial (532 aa).

The N-terminal 28 residues, 1-28 (MNKNMLVRSARPTLASIHRLFSAAAAAT), are a transit peptide targeting the mitochondrion. The interval 35–56 (PVVKPRSGGGKGGESANKKETV) is disordered. 10 PPR repeats span residues 161 to 195 (GHAA…GFLK), 196 to 226 (SCLP…LKIR), 230 to 264 (DIVT…KLNP), 265 to 295 (DWVT…MEKL), 300 to 330 (NRVA…VKSS), 335 to 365 (NDAE…WESV), 370 to 404 (DARI…GINP), 405 to 435 (SYST…AIDS), 442 to 472 (NVRL…LQKA), and 476 to 512 (NTQL…DEET).

The protein belongs to the PPR family. P subfamily.

It is found in the mitochondrion. In Arabidopsis thaliana (Mouse-ear cress), this protein is Pentatricopeptide repeat-containing protein At4g02820, mitochondrial.